A 265-amino-acid chain; its full sequence is Aquaporin-5 (265 aa).

The Cytoplasmic segment spans residues 1–12; sequence MKKEVCSVAFLK. A helical transmembrane segment spans residues 13–33; it reads AVFAEFLATLIFVFFGLGSAL. Over 34-39 the chain is Extracellular; the sequence is KWPSAL. The chain crosses the membrane as a helical span at residues 40–60; it reads PTILQIALAFGLAIGTLAQAL. Over 61–65 the chain is Cytoplasmic; the sequence is GPVSG. An intramembrane region (discontinuously helical) is located at residues 66-74; it reads GHINPAITL. Positions 69–71 match the NPA 1 motif; it reads NPA. Residues 75 to 87 lie on the Cytoplasmic side of the membrane; that stretch reads ALLVGNQISLLRA. The helical transmembrane segment at 88-108 threads the bilayer; that stretch reads FFYVAAQLVGAIAGAGILYGV. The Extracellular segment spans residues 109-126; sequence APLNARGNLAVNALNNNT. Asn124 and Asn125 each carry an N-linked (GlcNAc...) asparagine glycan. A helical membrane pass occupies residues 127–147; sequence TQGQAMVVELILTFQLALCIF. Topologically, residues 148 to 158 are cytoplasmic; the sequence is ASTDSRRTSPV. Residues 159-179 form a helical membrane-spanning segment; sequence GSPALSIGLSVTLGHLVGIYF. Position 180 (Thr180) is a topological domain, extracellular. Residues 181–191 constitute an intramembrane region (discontinuously helical); sequence GCSMNPARSFG. The NPA 2 motif lies at 185-187; the sequence is NPA. Over 192-203 the chain is Extracellular; it reads PAVVMNRFSPAH. A helical transmembrane segment spans residues 204 to 224; that stretch reads WVFWVGPIVGAVLAAILYFYL. Residues 225-265 are Cytoplasmic-facing; sequence LFPNSLSLSERVAIIKGTYEPDEDWEEQREERKKTMELTTR.

The protein belongs to the MIP/aquaporin (TC 1.A.8) family. Homotetramer; each monomer provides an independent water pore. Interacts with TRPV4; the interaction is probably indirect and regulates TRPV4 activation by hypotonicity. As to expression, detected in skin eccrine sweat glands, at the apical cell membrane and at intercellular canaliculi (at protein level).

The protein localises to the apical cell membrane. Its subcellular location is the cell membrane. It is found in the cytoplasmic vesicle membrane. It catalyses the reaction H2O(in) = H2O(out). In terms of biological role, aquaporins form homotetrameric transmembrane channels, with each monomer independently mediating water transport across the plasma membrane along its osmotic gradient. Plays an important role in fluid secretion in salivary glands. Required for TRPV4 activation by hypotonicity. Together with TRPV4, controls regulatory volume decrease in salivary epithelial cells. Seems to play a redundant role in water transport in the eye, lung and in sweat glands. The protein is Aquaporin-5 of Homo sapiens (Human).